The following is a 479-amino-acid chain: MRGDSFIWSLTTAASLLYATVESLQVVKRDNPSIVGFDIERFQVAKPVHRDIIAKRASGKTVSQDLDNQTIRAHIDTGSSDLWVNTDDSQFCSSRRSPCREGGTFDSSSSSTYQLVSNDFNISYVDGSGASGDYVTDVIEVGGIQLKEFQFAIGHTSSSPLGVLGIGYEAGEALVSRFGDESYPNLPAALVKAGHIRSNAYSLWLNDLSASRGQILFGGVDTGKFEGKLQTVPVLHTSGGDYTSLVIALTSVGIRTASEGSLDTFPAQPVAVAMDSGSSLSYLPDALAAKIYNSIDAVFDPSNNLAFVPCSMVNDDRKLVFTFSSPQITVGMDELVIDLGPDANGNEATFRDGSKACVFGIAPAGRSISILGDTVLRSAYLVYDLDNNEISIAPTRFNSTVTNIMEIGTGKNSVPDATGVPNAVTSAPITQATGLSGIETGVPGARPTSRGAAPTMRPDVTFGVAAAGLAGAGILFAFM.

Positions 1-19 (MRGDSFIWSLTTAASLLYA) are cleaved as a signal peptide. The Peptidase A1 domain occupies 58–393 (SGKTVSQDLD…DLDNNEISIA (336 aa)). A glycan (N-linked (GlcNAc...) asparagine) is linked at asparagine 68. Aspartate 76 is an active-site residue. Residue asparagine 121 is glycosylated (N-linked (GlcNAc...) asparagine). The active site involves aspartate 275. Asparagine 398 carries an N-linked (GlcNAc...) asparagine glycan. The interval 435-454 (LSGIETGVPGARPTSRGAAP) is disordered. Glycine 451 carries the GPI-anchor amidated glycine lipid modification. Residues 452–479 (AAPTMRPDVTFGVAAAGLAGAGILFAFM) constitute a propeptide, removed in mature form.

Belongs to the peptidase A1 family.

It localises to the cell membrane. In terms of biological role, probable GPI-anchored aspartic-type endopeptidase which contributes to virulence. In Arthroderma otae (strain ATCC MYA-4605 / CBS 113480) (Microsporum canis), this protein is Probable aspartic-type endopeptidase OPSB (OPSB).